A 518-amino-acid polypeptide reads, in one-letter code: Beta-TrCP (518 aa).

The span at 1-12 (MEGFSCSLQPPT) shows a compositional bias: polar residues. Residues 1–24 (MEGFSCSLQPPTASEREDCNRDEP) are disordered. Residues 14 to 24 (SEREDCNRDEP) are compositionally biased toward basic and acidic residues. Residues 119–157 (DHIAENILSYLDAKSLCSAELVCKEWYRVTSDGMLWKKL) form the F-box domain. 7 WD repeats span residues 230–258 (ETSK…KIWD), 270–298 (GHTG…RVWD), 310–338 (HHCE…AVWD), 353–381 (GHRA…KVWN), 393–421 (GHKR…RLWD), 433–461 (GHEE…KVWD), and 482–510 (EHSG…LIWD).

As to quaternary structure, part of a SCF (SKP1-cullin-F-box) ubiquitin-protein ligase complex. Interacts with fbxo5.

Its function is as follows. Substrate recognition component of a SCF (SKP1-CUL1-F-box protein) E3 ubiquitin-protein ligase complex which mediates the ubiquitination and subsequent proteasomal degradation of target proteins. Probably recognizes and binds to phosphorylated target proteins. May participate in Wnt signaling. This chain is Beta-TrCP (fbxw1), found in Xenopus laevis (African clawed frog).